A 185-amino-acid polypeptide reads, in one-letter code: MAAAARVSEVKAEGLLRGACTALAAAAALLVGLSTQTETVLLVRKKATVKDVQALWVLAMAAAAAAGYHLLQLLKCLYLGRVGGARPCRRSSRALAWTCLLLDKACAYTTFATTVAAAQACVVALDGAHALQWTKLCNIYTRFCEQVAGSLVLGMLAAVGTAVLSAASARNVFRHYASLETYAAH.

Residues 1 to 22 are Cytoplasmic-facing; that stretch reads MAAAARVSEVKAEGLLRGACTA. The helical transmembrane segment at 23 to 43 threads the bilayer; sequence LAAAAALLVGLSTQTETVLLV. The Extracellular portion of the chain corresponds to 44-53; it reads RKKATVKDVQ. A helical transmembrane segment spans residues 54 to 74; it reads ALWVLAMAAAAAAGYHLLQLL. Residues 75–104 lie on the Cytoplasmic side of the membrane; that stretch reads KCLYLGRVGGARPCRRSSRALAWTCLLLDK. A helical membrane pass occupies residues 105 to 125; it reads ACAYTTFATTVAAAQACVVAL. Topologically, residues 126–146 are extracellular; sequence DGAHALQWTKLCNIYTRFCEQ. The helical transmembrane segment at 147–167 threads the bilayer; it reads VAGSLVLGMLAAVGTAVLSAA. Topologically, residues 168–185 are cytoplasmic; that stretch reads SARNVFRHYASLETYAAH.

The protein belongs to the Casparian strip membrane proteins (CASP) family. As to quaternary structure, homodimer and heterodimers.

It localises to the cell membrane. This chain is CASP-like protein 2C2, found in Zea mays (Maize).